The sequence spans 241 residues: Phosphoadenosine 5'-phosphosulfate reductase (241 aa).

Residues 221 to 241 are disordered; sequence GADPRSGRWRGKAKTECGLHA. Cysteine 237 acts as the Nucleophile; cysteine thiosulfonate intermediate in catalysis.

It belongs to the PAPS reductase family. CysH subfamily.

Its subcellular location is the cytoplasm. The enzyme catalyses [thioredoxin]-disulfide + sulfite + adenosine 3',5'-bisphosphate + 2 H(+) = [thioredoxin]-dithiol + 3'-phosphoadenylyl sulfate. The protein operates within sulfur metabolism; hydrogen sulfide biosynthesis; sulfite from sulfate: step 3/3. Functionally, catalyzes the formation of sulfite from phosphoadenosine 5'-phosphosulfate (PAPS) using thioredoxin as an electron donor. The polypeptide is Phosphoadenosine 5'-phosphosulfate reductase (Gloeobacter violaceus (strain ATCC 29082 / PCC 7421)).